A 61-amino-acid chain; its full sequence is Photosystem II reaction center protein K (61 aa).

A propeptide spanning residues 1 to 24 is cleaved from the precursor; that stretch reads MLNTFSLIGICLNSTLFSSSFFFG. A helical transmembrane segment spans residues 36–56; the sequence is IVDIMPVIPLFFFLLAFVWQA.

Belongs to the PsbK family. As to quaternary structure, PSII is composed of 1 copy each of membrane proteins PsbA, PsbB, PsbC, PsbD, PsbE, PsbF, PsbH, PsbI, PsbJ, PsbK, PsbL, PsbM, PsbT, PsbX, PsbY, PsbZ, Psb30/Ycf12, at least 3 peripheral proteins of the oxygen-evolving complex and a large number of cofactors. It forms dimeric complexes.

It localises to the plastid. The protein localises to the chloroplast thylakoid membrane. Its function is as follows. One of the components of the core complex of photosystem II (PSII). PSII is a light-driven water:plastoquinone oxidoreductase that uses light energy to abstract electrons from H(2)O, generating O(2) and a proton gradient subsequently used for ATP formation. It consists of a core antenna complex that captures photons, and an electron transfer chain that converts photonic excitation into a charge separation. This is Photosystem II reaction center protein K from Nicotiana tomentosiformis (Tobacco).